Reading from the N-terminus, the 253-residue chain is 7-carboxy-7-deazaguanine synthase (253 aa).

Residues 12–14 and R32 contribute to the substrate site; that span reads WQG. Residues 23–253 form the Radical SAM core domain; the sequence is AFGRRQIFVR…FQVHKYLNVL (231 aa). Residues C36, C40, and C43 each contribute to the [4Fe-4S] cluster site. S45 is a Mg(2+) binding site. Position 98 (T98) interacts with substrate. G100 is an S-adenosyl-L-methionine binding site.

The protein belongs to the radical SAM superfamily. 7-carboxy-7-deazaguanine synthase family. In terms of assembly, homodimer. It depends on [4Fe-4S] cluster as a cofactor. Requires S-adenosyl-L-methionine as cofactor. Mg(2+) serves as cofactor.

It catalyses the reaction 6-carboxy-5,6,7,8-tetrahydropterin + H(+) = 7-carboxy-7-deazaguanine + NH4(+). It participates in purine metabolism; 7-cyano-7-deazaguanine biosynthesis. Catalyzes the complex heterocyclic radical-mediated conversion of 6-carboxy-5,6,7,8-tetrahydropterin (CPH4) to 7-carboxy-7-deazaguanine (CDG), a step common to the biosynthetic pathways of all 7-deazapurine-containing compounds. The sequence is that of 7-carboxy-7-deazaguanine synthase from Thermococcus kodakarensis (strain ATCC BAA-918 / JCM 12380 / KOD1) (Pyrococcus kodakaraensis (strain KOD1)).